Reading from the N-terminus, the 376-residue chain is Heterodimeric geranylgeranyl pyrophosphate synthase large subunit 2 (376 aa).

The signal sequence occupies residues methionine 1–leucine 24. Residues lysine 125, arginine 128, and histidine 157 each coordinate isopentenyl diphosphate. Mg(2+) contacts are provided by aspartate 164 and aspartate 170. Arginine 175 provides a ligand contact to dimethylallyl diphosphate. An isopentenyl diphosphate-binding site is contributed by arginine 176. Residues lysine 261, threonine 262, glutamine 299, lysine 316, and lysine 326 each contribute to the dimethylallyl diphosphate site.

It belongs to the FPP/GGPP synthase family. As to quaternary structure, monomer. Part of a heterodimeric geranyl(geranyl)diphosphate synthase. Interacts with GGR. The cofactor is Mg(2+). Mainly expressed in flowers.

The protein resides in the endoplasmic reticulum. It catalyses the reaction isopentenyl diphosphate + dimethylallyl diphosphate = (2E)-geranyl diphosphate + diphosphate. The catalysed reaction is isopentenyl diphosphate + (2E)-geranyl diphosphate = (2E,6E)-farnesyl diphosphate + diphosphate. It carries out the reaction isopentenyl diphosphate + (2E,6E)-farnesyl diphosphate = (2E,6E,10E)-geranylgeranyl diphosphate + diphosphate. The protein operates within isoprenoid biosynthesis; farnesyl diphosphate biosynthesis; farnesyl diphosphate from geranyl diphosphate and isopentenyl diphosphate: step 1/1. It functions in the pathway isoprenoid biosynthesis; geranyl diphosphate biosynthesis; geranyl diphosphate from dimethylallyl diphosphate and isopentenyl diphosphate: step 1/1. It participates in isoprenoid biosynthesis; geranylgeranyl diphosphate biosynthesis; geranylgeranyl diphosphate from farnesyl diphosphate and isopentenyl diphosphate: step 1/1. In terms of biological role, heterodimeric geranyl(geranyl)-diphosphate (GPP) synthase large subunit. In vitro, the large subunit catalyzes mainly the trans-addition of the three molecules of IPP onto DMAPP to form geranylgeranyl pyrophosphate while the small subunit alone is inactive. Upon association of the two subunits, the product profile is not changed. This is Heterodimeric geranylgeranyl pyrophosphate synthase large subunit 2 (GGPPS2) from Arabidopsis thaliana (Mouse-ear cress).